Consider the following 388-residue polypeptide: Formate-dependent phosphoribosylglycinamide formyltransferase (388 aa).

Residues 20–21 (EL) and Glu-80 contribute to the N(1)-(5-phospho-beta-D-ribosyl)glycinamide site. ATP-binding positions include Arg-112, Lys-153, 158 to 163 (SSGKGQ), 193 to 196 (EEFI), and Glu-201. Residues 117 to 306 (RLAFEKLGLR…EFEIHARAIL (190 aa)) enclose the ATP-grasp domain. Mg(2+) contacts are provided by Glu-265 and Glu-277. Residues Asp-284, Lys-352, and 359–360 (RR) each bind N(1)-(5-phospho-beta-D-ribosyl)glycinamide.

It belongs to the PurK/PurT family. As to quaternary structure, homodimer.

The catalysed reaction is N(1)-(5-phospho-beta-D-ribosyl)glycinamide + formate + ATP = N(2)-formyl-N(1)-(5-phospho-beta-D-ribosyl)glycinamide + ADP + phosphate + H(+). Its pathway is purine metabolism; IMP biosynthesis via de novo pathway; N(2)-formyl-N(1)-(5-phospho-D-ribosyl)glycinamide from N(1)-(5-phospho-D-ribosyl)glycinamide (formate route): step 1/1. In terms of biological role, involved in the de novo purine biosynthesis. Catalyzes the transfer of formate to 5-phospho-ribosyl-glycinamide (GAR), producing 5-phospho-ribosyl-N-formylglycinamide (FGAR). Formate is provided by PurU via hydrolysis of 10-formyl-tetrahydrofolate. In Methanococcus maripaludis (strain C5 / ATCC BAA-1333), this protein is Formate-dependent phosphoribosylglycinamide formyltransferase.